The sequence spans 467 residues: Dynactin subunit 4 (467 aa).

N-acetylalanine is present on alanine 2. Lysine 222 is covalently cross-linked (Glycyl lysine isopeptide (Lys-Gly) (interchain with G-Cter in SUMO2)). Threonine 414 carries the phosphothreonine modification.

This sequence belongs to the dynactin subunit 4 family. Subunit of dynactin, a multiprotein complex part of a tripartite complex with dynein and a adapter, such as BICDL1, BICD2 or HOOK3. The dynactin complex is built around ACTR1A/ACTB filament and consists of an actin-related filament composed of a shoulder domain, a pointed end and a barbed end. Its length is defined by its flexible shoulder domain. The soulder is composed of 2 DCTN1 subunits, 4 DCTN2 and 2 DCTN3. The 4 DCNT2 (via N-terminus) bind the ACTR1A filament and act as molecular rulers to determine the length. The pointed end is important for binding dynein-dynactin cargo adapters. Consists of 4 subunits: ACTR10, DCNT4, DCTN5 and DCTN6. The barbed end is composed of a CAPZA1:CAPZB heterodimers, which binds ACTR1A/ACTB filament and dynactin and stabilizes dynactin. Interacts with ATP7B, but not ATP7A, in a copper-dependent manner. Interacts with ANK2; this interaction is required for localization at costameres. Interacts with N4BP2L1.

It localises to the cytoplasm. The protein resides in the cytoskeleton. Its subcellular location is the microtubule organizing center. It is found in the centrosome. The protein localises to the stress fiber. It localises to the cell cortex. The protein resides in the myofibril. Its subcellular location is the sarcomere. Part of the dynactin complex that activates the molecular motor dynein for ultra-processive transport along microtubules. Together with dynein is involved in spindle assembly and cytokinesis. In Sus scrofa (Pig), this protein is Dynactin subunit 4 (DCTN4).